Here is a 453-residue protein sequence, read N- to C-terminus: Bifunctional protein GlmU (453 aa).

A pyrophosphorylase region spans residues 1-226 (MTLDVVILAA…ALEVEGVNNR (226 aa)). Residues 8–11 (LAAG), Lys-22, Gln-73, 78–79 (GT), 99–101 (YGD), Gly-136, Glu-151, Asn-166, and Asn-224 contribute to the UDP-N-acetyl-alpha-D-glucosamine site. Asp-101 is a Mg(2+) binding site. Residue Asn-224 participates in Mg(2+) binding. Positions 227 to 247 (SQMAALERAYQRDRAERLLTE) are linker. The interval 248–453 (GVALADPARF…AGWKRPRKSS (206 aa)) is N-acetyltransferase. Residues Arg-330 and Lys-348 each contribute to the UDP-N-acetyl-alpha-D-glucosamine site. The active-site Proton acceptor is His-360. Positions 363 and 374 each coordinate UDP-N-acetyl-alpha-D-glucosamine. Residues Ala-377, 383-384 (NY), Ser-402, Ala-420, and Arg-437 contribute to the acetyl-CoA site.

The protein in the N-terminal section; belongs to the N-acetylglucosamine-1-phosphate uridyltransferase family. In the C-terminal section; belongs to the transferase hexapeptide repeat family. As to quaternary structure, homotrimer. It depends on Mg(2+) as a cofactor.

It localises to the cytoplasm. The enzyme catalyses alpha-D-glucosamine 1-phosphate + acetyl-CoA = N-acetyl-alpha-D-glucosamine 1-phosphate + CoA + H(+). It carries out the reaction N-acetyl-alpha-D-glucosamine 1-phosphate + UTP + H(+) = UDP-N-acetyl-alpha-D-glucosamine + diphosphate. It participates in nucleotide-sugar biosynthesis; UDP-N-acetyl-alpha-D-glucosamine biosynthesis; N-acetyl-alpha-D-glucosamine 1-phosphate from alpha-D-glucosamine 6-phosphate (route II): step 2/2. The protein operates within nucleotide-sugar biosynthesis; UDP-N-acetyl-alpha-D-glucosamine biosynthesis; UDP-N-acetyl-alpha-D-glucosamine from N-acetyl-alpha-D-glucosamine 1-phosphate: step 1/1. It functions in the pathway bacterial outer membrane biogenesis; LPS lipid A biosynthesis. Its function is as follows. Catalyzes the last two sequential reactions in the de novo biosynthetic pathway for UDP-N-acetylglucosamine (UDP-GlcNAc). The C-terminal domain catalyzes the transfer of acetyl group from acetyl coenzyme A to glucosamine-1-phosphate (GlcN-1-P) to produce N-acetylglucosamine-1-phosphate (GlcNAc-1-P), which is converted into UDP-GlcNAc by the transfer of uridine 5-monophosphate (from uridine 5-triphosphate), a reaction catalyzed by the N-terminal domain. This chain is Bifunctional protein GlmU, found in Chromohalobacter salexigens (strain ATCC BAA-138 / DSM 3043 / CIP 106854 / NCIMB 13768 / 1H11).